We begin with the raw amino-acid sequence, 505 residues long: Flagellin (505 aa).

The protein belongs to the bacterial flagellin family.

Its subcellular location is the secreted. It is found in the bacterial flagellum. In terms of biological role, flagellin is the subunit protein which polymerizes to form the filaments of bacterial flagella. In Salmonella muenchen, this protein is Flagellin (fliC).